The chain runs to 103 residues: CLAVATA3/ESR (CLE)-related protein 22 (103 aa).

The first 34 residues, 1-34 (MGNYYSRRKSRKHITTVALIILLLLLFLFLYAKA), serve as a signal peptide directing secretion. The segment at 37-103 (SSPNIHHHST…FTGPNPLHNR (67 aa)) is disordered. Over residues 41–50 (IHHHSTHGSL) the composition is skewed to basic residues. Polar residues predominate over residues 66–76 (NAASSRGSKYT). Proline 97 is subject to Hydroxyproline. Residue proline 97 is glycosylated (O-linked (Ara...) hydroxyproline).

The protein belongs to the CLV3/ESR signal peptide family. The O-glycosylation (arabinosylation) of the hydroxyproline Pro-97 enhances binding affinity of the CLE22p peptide for its receptor. In terms of tissue distribution, mostly expressed in stems and apex, and, to a lower extent, in seedlings, leaves, flowers and siliques.

Its subcellular location is the secreted. The protein resides in the extracellular space. In terms of biological role, extracellular signal peptide that regulates cell fate. Represses root apical meristem maintenance. This chain is CLAVATA3/ESR (CLE)-related protein 22, found in Arabidopsis thaliana (Mouse-ear cress).